A 150-amino-acid chain; its full sequence is Phosphoribosyl-AMP cyclohydrolase (150 aa).

D93 serves as a coordination point for Mg(2+). Position 94 (C94) interacts with Zn(2+). D95 and D97 together coordinate Mg(2+). The Zn(2+) site is built by C112 and C119.

The protein belongs to the PRA-CH family. In terms of assembly, homodimer. Mg(2+) is required as a cofactor. It depends on Zn(2+) as a cofactor.

It is found in the cytoplasm. The catalysed reaction is 1-(5-phospho-beta-D-ribosyl)-5'-AMP + H2O = 1-(5-phospho-beta-D-ribosyl)-5-[(5-phospho-beta-D-ribosylamino)methylideneamino]imidazole-4-carboxamide. Its pathway is amino-acid biosynthesis; L-histidine biosynthesis; L-histidine from 5-phospho-alpha-D-ribose 1-diphosphate: step 3/9. In terms of biological role, catalyzes the hydrolysis of the adenine ring of phosphoribosyl-AMP. The chain is Phosphoribosyl-AMP cyclohydrolase from Rhizobium etli (strain ATCC 51251 / DSM 11541 / JCM 21823 / NBRC 15573 / CFN 42).